Consider the following 737-residue polypeptide: Polyribonucleotide nucleotidyltransferase (737 aa).

Residues Asp-489 and Asp-495 each coordinate Mg(2+). One can recognise a KH domain in the interval 556–615 (PKIDTIKIDVDKIKIVIGKGGETIDKIIAETGVKIDIDEEGNVSIYSSDQDAINRAKEII). The S1 motif domain occupies 625–693 (DEVYRAKVVR…EKGRVDASMK (69 aa)). The segment at 691 to 737 (SMKALLPRPPKPERDEKGEKSERPYRPRHHKDHKPKKEITETPKDSE) is disordered. 2 stretches are compositionally biased toward basic and acidic residues: residues 700-715 (PKPE…ERPY) and 725-737 (PKKE…KDSE).

The protein belongs to the polyribonucleotide nucleotidyltransferase family. Mg(2+) is required as a cofactor.

The protein localises to the cytoplasm. The enzyme catalyses RNA(n+1) + phosphate = RNA(n) + a ribonucleoside 5'-diphosphate. Involved in mRNA degradation. Catalyzes the phosphorolysis of single-stranded polyribonucleotides processively in the 3'- to 5'-direction. This chain is Polyribonucleotide nucleotidyltransferase, found in Streptococcus pneumoniae (strain Hungary19A-6).